The primary structure comprises 110 residues: Small ribosomal subunit protein eS25 (110 aa).

A disordered region spans residues 1–39 (MPPKAAGGKSKQIQASKAAAKGSSGGAGRKKWSKGRSRE).

Belongs to the eukaryotic ribosomal protein eS25 family.

In Dictyostelium discoideum (Social amoeba), this protein is Small ribosomal subunit protein eS25 (rps25).